Consider the following 1153-residue polypeptide: Nitric oxide synthase, inducible (1153 aa).

The DINNN-motif; mediates interaction with SPSB1, SPSB2 and SPSB4 motif lies at 23–27; sequence DINNN. Positions 110 and 115 each coordinate Zn(2+). Position 118 (S118) interacts with (6R)-L-erythro-5,6,7,8-tetrahydrobiopterin. A heme b-binding site is contributed by C200. Residue S234 is modified to Phosphoserine; by PKA. L-arginine contacts are provided by Q263, W372, Y373, and E377. Positions 381, 462, 463, and 476 each coordinate (6R)-L-erythro-5,6,7,8-tetrahydrobiopterin. Y491 contributes to the heme b binding site. A calmodulin-binding region spans residues 515 to 535; sequence LKVLVKAVLFACMLMRKTMAS. A Flavodoxin-like domain is found at 539 to 677; it reads VTILFATETG…AFRSWAVQTF (139 aa). Residues T545, E546, T547, K549, and S550 each contribute to the FMN site. Y575 is modified (phosphotyrosine). Phosphoserine; by PKA is present on S578. 7 residues coordinate FMN: S591, T592, S628, R633, C635, E661, and Q665. The 241-residue stretch at 730–970 folds into the FAD-binding FR-type domain; that stretch reads KNVFTMRLKS…VRNASGFHLP (241 aa). An NADP(+)-binding site is contributed by R750. H772 lines the FAD pocket. S892 is subject to Phosphoserine; by PKA. 5 residues coordinate FAD: R906, Y908, S909, T924, and A926. NADP(+) is bound at residue T929. Positions 930, 943, 944, and 945 each coordinate FAD. The NADP(+) site is built by T984, R1017, S1046, R1047, K1053, Y1055, Q1057, and D1090.

The protein belongs to the NOS family. In terms of assembly, homodimer. Interacts with NHERF1. Interacts with GAPDH; induced by oxidatively-modified low-densitity lipoprotein (LDL(ox)). Interacts with S100A8 and S100A9 to form the iNOS-S100A8/9 transnitrosylase complex. Interacts with SPSB1, SPSB2 and SPSB4. Interacts with ELOC and CUL5 in the presence of SPSB1 or SPSB2 or SPSB4. Forms a complex with ASL, ASS1 and HSP90AA1; the complex regulates cell-autonomous L-arginine synthesis and citrulline recycling while channeling extracellular L-arginine to nitric oxide synthesis pathway. Heme b serves as cofactor. It depends on FAD as a cofactor. FMN is required as a cofactor. The cofactor is (6R)-L-erythro-5,6,7,8-tetrahydrobiopterin. In terms of processing, polyubiquitinated; mediated by SPSB1, SPSB2 and SPSB4, leading to proteasomal degradation. As to expression, expressed in the liver, retina, bone cells and airway epithelial cells of the lung. Not expressed in the platelets. Expressed in chondrocytes.

The protein resides in the cytoplasm. It is found in the cytosol. It carries out the reaction 2 L-arginine + 3 NADPH + 4 O2 + H(+) = 2 L-citrulline + 2 nitric oxide + 3 NADP(+) + 4 H2O. With respect to regulation, regulated by calcium/calmodulin. Aspirin inhibits expression and function of this enzyme and effects may be exerted at the level of translational/post-translational modification and directly on the catalytic activity. Functionally, produces nitric oxide (NO) which is a messenger molecule with diverse functions throughout the body. In macrophages, NO mediates tumoricidal and bactericidal actions. Also has nitrosylase activity and mediates cysteine S-nitrosylation of cytoplasmic target proteins such PTGS2/COX2. As component of the iNOS-S100A8/9 transnitrosylase complex involved in the selective inflammatory stimulus-dependent S-nitrosylation of GAPDH on 'Cys-247' implicated in regulation of the GAIT complex activity and probably multiple targets including ANXA5, EZR, MSN and VIM. Involved in inflammation, enhances the synthesis of pro-inflammatory mediators such as IL6 and IL8. The protein is Nitric oxide synthase, inducible of Homo sapiens (Human).